Here is a 214-residue protein sequence, read N- to C-terminus: Large ribosomal subunit protein eL14 (214 aa).

Lysine 79 is modified (N6-acetyllysine). Lysine 85 bears the N6-acetyllysine; alternate mark. An N6-succinyllysine; alternate modification is found at lysine 85. Lysine 124 is covalently cross-linked (Glycyl lysine isopeptide (Lys-Gly) (interchain with G-Cter in SUMO2)). Serine 139 carries the phosphoserine modification. The tract at residues 161 to 214 is disordered; it reads PAKKITTEGKKAPAQKAPAQKAAGQKAAPPPKTQKGQKAPSQKAPAPKASGKKA. The 1-1; approximate repeat unit spans residues 170-174; sequence KKAPA. A 4 X 5 AA tandem repeats of Q-K-A-[APS]-X region spans residues 170–189; it reads KKAPAQKAPAQKAAGQKAAP. A compositionally biased stretch (low complexity) spans 172-214; that stretch reads APAQKAPAQKAAGQKAAPPPKTQKGQKAPSQKAPAPKASGKKA. 5 tandem repeats follow at residues 175-179, 180-184, 185-189, 192-194, and 195-197. Residues 192–197 are 2 X 3 AA tandem repeats of K-G-Q; sequence KTQKGQ. Residue lysine 203 is modified to N6-succinyllysine.

The protein belongs to the eukaryotic ribosomal protein eL14 family. Component of the large ribosomal subunit.

It localises to the cytoplasm. In terms of biological role, component of the large ribosomal subunit. The ribosome is a large ribonucleoprotein complex responsible for the synthesis of proteins in the cell. This chain is Large ribosomal subunit protein eL14 (RPL14), found in Bos taurus (Bovine).